We begin with the raw amino-acid sequence, 238 residues long: Transcriptional repressor ThaA (238 aa).

The HTH luxR-type domain occupies isoleucine 169–glycine 234. A DNA-binding region (H-T-H motif) is located at residues valine 193–glutamine 212.

This sequence belongs to the autoinducer-regulated transcriptional regulatory protein family.

In terms of biological role, represses thailandamide production. This Burkholderia thailandensis (strain ATCC 700388 / DSM 13276 / CCUG 48851 / CIP 106301 / E264) protein is Transcriptional repressor ThaA.